We begin with the raw amino-acid sequence, 544 residues long: Putative ankyrin repeat protein L289 (544 aa).

ANK repeat units lie at residues 31 to 71 (KNFS…AQNE), 72 to 105 (HGWT…DPNI), 110 to 143 (YSQT…DINH), 147 to 181 (LGVS…DINS), 185 to 218 (QGNT…DPNI), 222 to 255 (KGTT…NINF), 259 to 297 (YNET…DIPI), 300 to 339 (DKLS…IQCS), 340 to 374 (NGKT…NPNI), 378 to 413 (QGKT…TIDN), and 414 to 447 (TGQS…CVNK).

This Acanthamoeba polyphaga mimivirus (APMV) protein is Putative ankyrin repeat protein L289.